The following is a 127-amino-acid chain: Protein FAM229A (127 aa).

The interval 1-96 (MLPSSTPGPG…ATEHNPVRPL (96 aa)) is disordered. The segment covering 24 to 39 (RSPAARAPAAASSLGP) has biased composition (low complexity).

This sequence belongs to the FAM229 family.

This chain is Protein FAM229A (FAM229A), found in Homo sapiens (Human).